The following is a 168-amino-acid chain: Peptide methionine sulfoxide reductase MsrA 2 (168 aa).

Cysteine 11 is a catalytic residue.

The protein belongs to the MsrA Met sulfoxide reductase family.

It catalyses the reaction L-methionyl-[protein] + [thioredoxin]-disulfide + H2O = L-methionyl-(S)-S-oxide-[protein] + [thioredoxin]-dithiol. The catalysed reaction is [thioredoxin]-disulfide + L-methionine + H2O = L-methionine (S)-S-oxide + [thioredoxin]-dithiol. Has an important function as a repair enzyme for proteins that have been inactivated by oxidation. Catalyzes the reversible oxidation-reduction of methionine sulfoxide in proteins to methionine. The protein is Peptide methionine sulfoxide reductase MsrA 2 of Rhodopirellula baltica (strain DSM 10527 / NCIMB 13988 / SH1).